The chain runs to 628 residues: Monoterpene synthase like 1, chloroplastic (628 aa).

Residues D379, D383, and D531 each coordinate Mg(2+). The DDXXD motif motif lies at 379–383 (DDIYD).

This sequence belongs to the terpene synthase family. Tpsd subfamily. Mg(2+) is required as a cofactor. The cofactor is Mn(2+).

It is found in the plastid. The protein localises to the chloroplast. It participates in terpene metabolism; oleoresin biosynthesis. Its pathway is secondary metabolite biosynthesis; terpenoid biosynthesis. Monoterpene synthase (TPS) involved in the biosynthesis of monoterpene natural products included in conifer oleoresin secretions and volatile emissions; these compounds contribute to biotic and abiotic stress defense against herbivores and pathogens. This Pinus banksiana (Jack pine) protein is Monoterpene synthase like 1, chloroplastic.